A 39-amino-acid polypeptide reads, in one-letter code: Photosystem II reaction center protein J (39 aa).

The chain crosses the membrane as a helical span at residues 7–27; that stretch reads IPLWLVATIGGIAVLTVLGLF.

The protein belongs to the PsbJ family. In terms of assembly, PSII is composed of 1 copy each of membrane proteins PsbA, PsbB, PsbC, PsbD, PsbE, PsbF, PsbH, PsbI, PsbJ, PsbK, PsbL, PsbM, PsbT, PsbX, PsbY, PsbZ, Psb30/Ycf12, at least 3 peripheral proteins of the oxygen-evolving complex and a large number of cofactors. It forms dimeric complexes.

It localises to the plastid. Its subcellular location is the chloroplast thylakoid membrane. Its function is as follows. One of the components of the core complex of photosystem II (PSII). PSII is a light-driven water:plastoquinone oxidoreductase that uses light energy to abstract electrons from H(2)O, generating O(2) and a proton gradient subsequently used for ATP formation. It consists of a core antenna complex that captures photons, and an electron transfer chain that converts photonic excitation into a charge separation. This is Photosystem II reaction center protein J from Cyanidioschyzon merolae (strain NIES-3377 / 10D) (Unicellular red alga).